Here is a 142-residue protein sequence, read N- to C-terminus: Pleckstrin homology-like domain family A member 2 (142 aa).

Ser-3 is modified (phosphoserine). The PH domain maps to 7–99 (VLREGELEKR…WNASITLALI (93 aa)).

This sequence belongs to the PHLDA2 family.

The protein localises to the cytoplasm. The protein resides in the membrane. Its function is as follows. Plays a role in regulating placenta growth. May act via its PH domain that competes with other PH domain-containing proteins, thereby preventing their binding to membrane lipids. The protein is Pleckstrin homology-like domain family A member 2 (PHLDA2) of Bos taurus (Bovine).